A 456-amino-acid polypeptide reads, in one-letter code: Keratin, type I cytoskeletal 12 (456 aa).

Residues 1–19 (MSLSVRTSALSRRSSSQNG) are compositionally biased toward polar residues. The disordered stretch occupies residues 1–25 (MSLSVRTSALSRRSSSQNGVAGRPW). A head region spans residues 1-114 (MSLSVRTSAL…GNDGGLLSGS (114 aa)). The tract at residues 115–150 (EKETMQNLNDRLASYLGKVRALEEANAELENKIREW) is coil 1A. Residues 115-402 (EKETMQNLND…RLLEGDTQGD (288 aa)) enclose the IF rod domain. The segment at 154 to 171 (RRTGDSGSQSDYSKYYPL) is linker 1. Residues 172-263 (IEDLKNKIIS…KNHEEELQSF (92 aa)) form a coil 1B region. The tract at residues 264–286 (QAGGPGEVNVEMDAAPGVDLTKS) is linker 12. The tract at residues 287–397 (GELRKEINSN…IETYRRLLEG (111 aa)) is coil 2. A tail region spans residues 398-456 (DTQGDGFDESLSLTVSKPQAPSVDSSKDPNKTRKIKTVVQEIVNGEVVSSQVQELEEAM). The interval 405-430 (DESLSLTVSKPQAPSVDSSKDPNKTR) is disordered. Residues 408–421 (LSLTVSKPQAPSVD) show a composition bias toward polar residues.

This sequence belongs to the intermediate filament family. In terms of assembly, heterotetramer of two type I and two type II keratins. Keratin-3 associates with keratin-12.

In terms of biological role, involved in corneal epithelium organization, integrity and corneal keratin expression. In Rattus norvegicus (Rat), this protein is Keratin, type I cytoskeletal 12.